The following is a 367-amino-acid chain: Flagellar P-ring protein (367 aa).

Residues 1–24 (MLRPIITLLCLTLMLCTAAGPAGA) form the signal peptide.

Belongs to the FlgI family. The basal body constitutes a major portion of the flagellar organelle and consists of four rings (L,P,S, and M) mounted on a central rod.

It localises to the periplasm. Its subcellular location is the bacterial flagellum basal body. Functionally, assembles around the rod to form the L-ring and probably protects the motor/basal body from shearing forces during rotation. The sequence is that of Flagellar P-ring protein from Syntrophotalea carbinolica (strain DSM 2380 / NBRC 103641 / GraBd1) (Pelobacter carbinolicus).